Reading from the N-terminus, the 406-residue chain is Mitochondrial ribosome-associated GTPase 2 (406 aa).

The interval 15–406 (FEGVGHWALS…LGQGRQPLRW (392 aa)) is localized in the mitochondria. The segment at 30 to 406 (KPSRLLPQQA…LGQGRQPLRW (377 aa)) is not localized in the mitochondria. One can recognise an Obg domain in the interval 70-224 (RYFVDYRRVL…RVLHLELKTV (155 aa)). Residues 225-390 (AHAGMVGFPN…LLLHLKVLYD (166 aa)) enclose the OBG-type G domain. GTP contacts are provided by residues 231 to 238 (GFPNAGKS), 256 to 260 (FTTLK), 278 to 281 (DIPG), 345 to 348 (NKID), and 371 to 373 (SAL). Mg(2+) contacts are provided by Ser238 and Thr258.

The protein belongs to the TRAFAC class OBG-HflX-like GTPase superfamily. OBG GTPase family. In terms of assembly, associates with the mitochondrial ribosome large subunit; the association occurs in a GTP-dependent manner. The cofactor is Mg(2+).

The protein resides in the mitochondrion. It is found in the mitochondrion inner membrane. Functionally, plays a role in the regulation of the mitochondrial ribosome assembly and of translational activity. Displays GTPase activity. Involved in the ribosome maturation process. This chain is Mitochondrial ribosome-associated GTPase 2 (MTG2), found in Pongo abelii (Sumatran orangutan).